A 324-amino-acid polypeptide reads, in one-letter code: Acetyl-coenzyme A carboxylase carboxyl transferase subunit alpha (324 aa).

The region spanning Ile37–Gln291 is the CoA carboxyltransferase C-terminal domain.

This sequence belongs to the AccA family. As to quaternary structure, acetyl-CoA carboxylase is a heterohexamer composed of biotin carboxyl carrier protein (AccB), biotin carboxylase (AccC) and two subunits each of ACCase subunit alpha (AccA) and ACCase subunit beta (AccD).

It is found in the cytoplasm. The enzyme catalyses N(6)-carboxybiotinyl-L-lysyl-[protein] + acetyl-CoA = N(6)-biotinyl-L-lysyl-[protein] + malonyl-CoA. The protein operates within lipid metabolism; malonyl-CoA biosynthesis; malonyl-CoA from acetyl-CoA: step 1/1. Its function is as follows. Component of the acetyl coenzyme A carboxylase (ACC) complex. First, biotin carboxylase catalyzes the carboxylation of biotin on its carrier protein (BCCP) and then the CO(2) group is transferred by the carboxyltransferase to acetyl-CoA to form malonyl-CoA. The protein is Acetyl-coenzyme A carboxylase carboxyl transferase subunit alpha of Bacillus cereus (strain Q1).